A 720-amino-acid polypeptide reads, in one-letter code: Putative glutamine--fructose-6-phosphate aminotransferase [isomerizing] (720 aa).

Residue Cys2 is the Nucleophile; for GATase activity of the active site. The Glutamine amidotransferase type-2 domain maps to 2-321; that stretch reads CGIFGYCNFL…DNDTAHIYDG (320 aa). The segment covering 266 to 280 has biased composition (polar residues); the sequence is STTSTFNHGSSTETP. A disordered region spans residues 266–285; it reads STTSTFNHGSSTETPAENGL. SIS domains lie at 393–532 and 565–710; these read WLTE…DLVS and CDKK…VDLP.

It carries out the reaction D-fructose 6-phosphate + L-glutamine = D-glucosamine 6-phosphate + L-glutamate. Its pathway is nucleotide-sugar biosynthesis; UDP-N-acetyl-alpha-D-glucosamine biosynthesis; alpha-D-glucosamine 6-phosphate from D-fructose 6-phosphate: step 1/1. Its function is as follows. Involved in amino sugar synthesis (formation of chitin, supplies the amino sugars of asparagine-linked oligosaccharides of glycoproteins). The polypeptide is Putative glutamine--fructose-6-phosphate aminotransferase [isomerizing] (Saccharomyces cerevisiae (strain JAY291) (Baker's yeast)).